An 80-amino-acid chain; its full sequence is Mu-conotoxin BuIIIC (80 aa).

The signal sequence occupies residues 1 to 22; sequence MMSKLGVLLTICLLLFPLFALP. A propeptide spanning residues 23-51 is cleaved from the precursor; it reads QDGDQPADRPAERMQDDLSSEQHPLFEKR. 3 cysteine pairs are disulfide-bonded: cysteine 56/cysteine 70, cysteine 57/cysteine 76, and cysteine 66/cysteine 77. Cysteine 77 carries the post-translational modification Cysteine amide.

It belongs to the conotoxin M superfamily. As to expression, expressed by the venom duct.

It is found in the secreted. Its function is as follows. Mu-conotoxins block voltage-gated sodium channels. Extremely potent inhibitor of Nav1.4/SCN4A (96% inhibition at 1 uM). The inhibition is very slowly reversible. In Conus bullatus (Bubble cone), this protein is Mu-conotoxin BuIIIC.